The following is a 430-amino-acid chain: Serine hydroxymethyltransferase (430 aa).

(6S)-5,6,7,8-tetrahydrofolate is bound by residues L123 and 127-129 (GHL). K232 carries the N6-(pyridoxal phosphate)lysine modification. E248 is a binding site for (6S)-5,6,7,8-tetrahydrofolate.

The protein belongs to the SHMT family. In terms of assembly, homodimer. Requires pyridoxal 5'-phosphate as cofactor.

The protein resides in the cytoplasm. It catalyses the reaction (6R)-5,10-methylene-5,6,7,8-tetrahydrofolate + glycine + H2O = (6S)-5,6,7,8-tetrahydrofolate + L-serine. Its pathway is one-carbon metabolism; tetrahydrofolate interconversion. It participates in amino-acid biosynthesis; glycine biosynthesis; glycine from L-serine: step 1/1. Catalyzes the reversible interconversion of serine and glycine with tetrahydrofolate (THF) serving as the one-carbon carrier. This reaction serves as the major source of one-carbon groups required for the biosynthesis of purines, thymidylate, methionine, and other important biomolecules. Also exhibits THF-independent aldolase activity toward beta-hydroxyamino acids, producing glycine and aldehydes, via a retro-aldol mechanism. This Anaplasma marginale (strain Florida) protein is Serine hydroxymethyltransferase.